Reading from the N-terminus, the 357-residue chain is Spermatogenesis- and oogenesis-specific basic helix-loop-helix-containing protein 1 (357 aa).

Positions 1-14 (MASGGHERANEDYR) are enriched in basic and acidic residues. The disordered stretch occupies residues 1 to 40 (MASGGHERANEDYRVSGITGCSKTPQPETQDSLQTSSQSS). Over residues 19 to 31 (TGCSKTPQPETQD) the composition is skewed to polar residues. In terms of domain architecture, bHLH spans 54-105 (PSLRRNVVSERERRRRISLSCEHLRALLPQFDGRREDMASVLEMSVYFLQLA). The disordered stretch occupies residues 145–210 (KPDSGIAKPS…EPESSSLGPG (66 aa)). A compositionally biased stretch (low complexity) spans 200–209 (SEPESSSLGP).

As to quaternary structure, forms both hetero- and homodimers with SOHLH2. As to expression, in males, it is mainly expressed in testis, while in females it is mainly expressed in ovary. In testis, it is exclusively expressed in spermatogonia, with a preference for prespermatogonia and type A spermatogonia. In ovary, it is detected in germ cell cysts, primordial follicles, and primary follicles but is undetectable by the secondary follicle stage (at protein level). Expressed in the majority of spermatogonia in adult animals, but not in the most undifferentiated spermatogonial population.

Its subcellular location is the cytoplasm. It localises to the nucleus. Transcription regulator of both male and female germline differentiation. Suppresses genes involved in spermatogonial stem cells maintenance, and induces genes important for spermatogonial differentiation. Coordinates oocyte differentiation without affecting meiosis I. This is Spermatogenesis- and oogenesis-specific basic helix-loop-helix-containing protein 1 (Sohlh1) from Mus musculus (Mouse).